The chain runs to 568 residues: Probable inactive 1-aminocyclopropane-1-carboxylate synthase-like protein 2 (568 aa).

The tract at residues 1–21 (MSHRSDTLPVPSGQRRGRVPR) is disordered. Position 395 is an N6-(pyridoxal phosphate)lysine (Lys-395).

This sequence belongs to the class-I pyridoxal-phosphate-dependent aminotransferase family.

The sequence is that of Probable inactive 1-aminocyclopropane-1-carboxylate synthase-like protein 2 (ACCSL) from Homo sapiens (Human).